The following is a 207-amino-acid chain: Large ribosomal subunit protein uL4 (207 aa).

The disordered stretch occupies residues 49 to 78 (HAVKNRSAVRGGGKKPWRQKGTGRARQGSI). Positions 60 to 71 (GGKKPWRQKGTG) are enriched in basic residues.

This sequence belongs to the universal ribosomal protein uL4 family. As to quaternary structure, part of the 50S ribosomal subunit.

In terms of biological role, one of the primary rRNA binding proteins, this protein initially binds near the 5'-end of the 23S rRNA. It is important during the early stages of 50S assembly. It makes multiple contacts with different domains of the 23S rRNA in the assembled 50S subunit and ribosome. Functionally, forms part of the polypeptide exit tunnel. In Ligilactobacillus salivarius (strain UCC118) (Lactobacillus salivarius), this protein is Large ribosomal subunit protein uL4.